Reading from the N-terminus, the 1402-residue chain is MAEHGESSEDRISEIDYEFLAELSARFGMNLVQLAKSQEEEDHKERMKMKKGFNSQMRSEAKRLKTFESYDTFRSWTPQEMAAAGFYHTGVKLGVQCFCCSLILFGNSLRKLPIERHKKLRPECEFLQGKDVGNIGKYDIRVKSPEKMLRGGKARYHEEEARLESFEDWPFYAHGTSPRVLSAAGFVFTGKRDTVQCFSCGGSLGNWEEGDDPWKEHAKWFPKCEFLQSKKSSEEIAQYIQGYEGFVHVTGEHFVKSWVRRELPMVSAYCNDSVFANEELRMDMFKDWPQESPVGVEALVRAGFFYTGKKDIVRCFSCGGCLEKWAEGDDPMEDHIKFFPECVFLQTLKSSAEVIPTLQSQYALPEATETTRESNHGDAAAVHSTVVDLGRSEAQWFQEARSLSEQLRDTYTKTSFCHMNLPEVCSSLGTDHLLSCDVSIISKHISQPVQGALTIPEVFSNLSSVMCVEGEAGSGKTTFLKRIAFLWASGCCPLLYRFQLVFYLSLSSITPDQGLDNIICTQLLGAGGCISEVCLSSSIQQLQHQVLFLLDDYSGLASLPQALHTLITKNYLFRTCLLIAVHTNRVRDIRPYLGTSLEIQEFPFYNTVFVLRKFFSHDIICVEKLIIYFSENKDLQGVYKTPLFVAAVCNDWNQNASAQDDFQDVTLFHSYMQYLSLKYKATAESLQATVSSCGQLALTGLFSSCFEFNSDDLAEAGVDEDVKLTTFLMSKFTAQRLRPVYRFLGPLFQEFLAAVRLTELLSSDRQEDQDLGLYYLRQIDSPLKAINSFNIFLYYVSSHSSSKAAPTVVSHLLQLVDEKESLENMSENEDYMKLHPQTFLWFQFVRGLWLVSPESFSSFVSEHLLRLALIFAYESNTVAECSPFILQFLRGRTLALRVLNLEYFWDHPESLLLLRSLKVSINGNKMSSYVDYSFKTYFENLQPPAINEEYTSAFEHVSEWRRNFAQDEEIIKNYENIWPRALPDISEGYWNLSPKPCKIPKLEVQVNNMGPADQALLQVLMEVFSASQSIEFHLFNSSGFLESIRPALELSKASVTKCSMSRLELSRAEQELLLTLPALQSLEVSETNQLPDQLFHNLHKFLGLKELCVRLDGKPDVLSVLPEEFLNLHHMEKLSIRTSTESDLSKLVKFIQNFPNLHVFHLKCDFLSNCESLMTALASCKKLREIEFSGQCFEAMTFVNILPNFVSLKILSLKGQQFADKETSEKFAQALGSLRNLEELLVPTGDGIHQVAKLIVRQCLQLPCLRVLAFHDILDDESVIEIGAATSGSFQKLENLDISMNHKITEEGYRNFFQALDNLPNLQMLNICRNIPGRIQVQATTVKALCHCVSRLPSLTRLGMLSWLLDEEDMKVINDVKERHPQSKRLTIFWKWIVPFSPVVLE.

BIR repeat units lie at residues 60 to 127 (EAKR…CEFL), 159 to 227 (EEAR…CEFL), and 278 to 345 (EELR…CVFL). 4 residues coordinate Zn(2+): C315, C318, H335, and C342. One can recognise an NACHT domain in the interval 464–759 (SVMCVEGEAG…EFLAAVRLTE (296 aa)). Position 476 (K476) interacts with ATP.

In terms of biological role, prevents motor-neuron apoptosis induced by a variety of signals. In Mus musculus (Mouse), this protein is Baculoviral IAP repeat-containing protein 1g (Naip7).